Consider the following 399-residue polypeptide: Probable WRKY transcription factor 48 (399 aa).

Basic and acidic residues-rich tracts occupy residues 1 to 11 (MEKKKEEDHHH) and 19 to 38 (KEIKNTETKIEQEQEQEQKQ). Disordered regions lie at residues 1-57 (MEKK…TSSD) and 138-202 (AESS…KNQK). Residues 143-161 (VVNTTPTSPNSTSVSSSSN) are compositionally biased toward low complexity. The span at 162–171 (EAANDNNSGK) shows a compositional bias: polar residues. Residues 184-193 (QQEQKGTKPQ) show a composition bias toward low complexity. Positions 215–280 (SDIDNLDDGY…YEGQHTHPFP (66 aa)) form a DNA-binding region, WRKY. The tract at residues 361–399 (QASTSTSSSIRDHGLLQDILPSQIRSDTINTQTNEENKK) is disordered. Positions 383–399 (QIRSDTINTQTNEENKK) are enriched in polar residues.

It is found in the nucleus. Its function is as follows. Transcription factor. Interacts specifically with the W box (5'-(T)TGAC[CT]-3'), a frequently occurring elicitor-responsive cis-acting element. The sequence is that of Probable WRKY transcription factor 48 (WRKY48) from Arabidopsis thaliana (Mouse-ear cress).